The chain runs to 353 residues: Rhodopsin (353 aa).

The Extracellular portion of the chain corresponds to 1–36 (MNGTEGPFFYVPMLNTTGIVRSPYDYPQYYLVNPAA). N-linked (GlcNAc...) asparagine glycans are attached at residues Asn2 and Asn15. A helical membrane pass occupies residues 37–61 (YAALGAYMFLLILLGFPINFLTLYV). Over 62-73 (TIEHKKLRTPLN) the chain is Cytoplasmic. Residues 74–96 (YILLNLAVANLFMVFGGFTTTMY) form a helical membrane-spanning segment. Topologically, residues 97–110 (TSMHGYFVLGRLGC) are extracellular. Cys110 and Cys187 are oxidised to a cystine. The chain crosses the membrane as a helical span at residues 111 to 133 (NLEGFFATLGGEIGLWSLVVLAI). The short motif at 134–136 (ERW) is the 'Ionic lock' involved in activated form stabilization element. At 134-152 (ERWMVVCKPISNFRFGENH) the chain is on the cytoplasmic side. A helical transmembrane segment spans residues 153–173 (AIMGLAFTWIMACACAVPPLV). Over 174–202 (GWSRYIPEGMQCSCGVDYYTRAEGFNNES) the chain is Extracellular. N-linked (GlcNAc...) asparagine glycosylation is present at Asn200. Residues 203-224 (FVVYMFICHFLIPMAVVFFCYG) traverse the membrane as a helical segment. The Cytoplasmic segment spans residues 225–252 (RLLCAVKEAAAAQQESETTQRAEREVTR). A helical transmembrane segment spans residues 253–274 (MVVIMVVAFLICWLPYAGVAWW). The Extracellular portion of the chain corresponds to 275 to 286 (IFTHQGSEFGPV). A helical transmembrane segment spans residues 287 to 308 (FMTIPAFFAKSSSIYNPLIYIC). Position 296 is an N6-(retinylidene)lysine (Lys296). Over 309–353 (MNKQFRHCMITTLCCGKNPFEEEEGASTTSKTEASSVSSSSVSPA) the chain is Cytoplasmic. S-palmitoyl cysteine attachment occurs at residues Cys322 and Cys323. The tract at residues 330 to 353 (EEEGASTTSKTEASSVSSSSVSPA) is disordered. The segment covering 334 to 353 (ASTTSKTEASSVSSSSVSPA) has biased composition (low complexity).

This sequence belongs to the G-protein coupled receptor 1 family. Opsin subfamily. In terms of processing, phosphorylated on some or all of the serine and threonine residues present in the C-terminal region. Contains one covalently linked retinal chromophore.

It localises to the membrane. Its subcellular location is the cell projection. It is found in the cilium. The protein localises to the photoreceptor outer segment. In terms of biological role, photoreceptor required for image-forming vision at low light intensity. While most salt water fish species use retinal as chromophore, most freshwater fish use 3-dehydroretinal, or a mixture of retinal and 3-dehydroretinal. Light-induced isomerization of 11-cis to all-trans retinal triggers a conformational change that activates signaling via G-proteins. Subsequent receptor phosphorylation mediates displacement of the bound G-protein alpha subunit by arrestin and terminates signaling. The chain is Rhodopsin (rho) from Tetraodon nigroviridis (Spotted green pufferfish).